The sequence spans 195 residues: Imidazoleglycerol-phosphate dehydratase (195 aa).

Belongs to the imidazoleglycerol-phosphate dehydratase family.

The protein resides in the cytoplasm. It catalyses the reaction D-erythro-1-(imidazol-4-yl)glycerol 3-phosphate = 3-(imidazol-4-yl)-2-oxopropyl phosphate + H2O. Its pathway is amino-acid biosynthesis; L-histidine biosynthesis; L-histidine from 5-phospho-alpha-D-ribose 1-diphosphate: step 6/9. The polypeptide is Imidazoleglycerol-phosphate dehydratase (Geobacillus thermodenitrificans (strain NG80-2)).